The following is a 118-amino-acid chain: Large ribosomal subunit protein bL20 (118 aa).

The protein belongs to the bacterial ribosomal protein bL20 family.

In terms of biological role, binds directly to 23S ribosomal RNA and is necessary for the in vitro assembly process of the 50S ribosomal subunit. It is not involved in the protein synthesizing functions of that subunit. The sequence is that of Large ribosomal subunit protein bL20 from Azotobacter vinelandii.